Reading from the N-terminus, the 116-residue chain is Phosphoribosyl-ATP pyrophosphatase (116 aa).

This sequence belongs to the PRA-PH family.

The protein resides in the cytoplasm. It catalyses the reaction 1-(5-phospho-beta-D-ribosyl)-ATP + H2O = 1-(5-phospho-beta-D-ribosyl)-5'-AMP + diphosphate + H(+). Its pathway is amino-acid biosynthesis; L-histidine biosynthesis; L-histidine from 5-phospho-alpha-D-ribose 1-diphosphate: step 2/9. The polypeptide is Phosphoribosyl-ATP pyrophosphatase (Bordetella avium (strain 197N)).